The sequence spans 232 residues: U2 small nuclear ribonucleoprotein B'' (232 aa).

One can recognise an RRM 1 domain in the interval 10 to 89 (QSIYIQNLNE…KPMRLQYAKA (80 aa)). The disordered stretch occupies residues 100-157 (TFVPKDKKRKQEEKVERKREDSQRPNTANGPSANGPSANNGVPAPSFQPSGQETMPPN). Positions 108 to 122 (RKQEEKVERKREDSQ) are enriched in basic and acidic residues. Composition is skewed to polar residues over residues 123 to 139 (RPNTANGPSANGPSANN) and 146 to 156 (FQPSGQETMPP). Positions 158–232 (NILFIQNLPH…NPMVISFAKK (75 aa)) constitute an RRM 2 domain.

This sequence belongs to the RRM U1 A/B'' family. In terms of assembly, component of the spliceosome where it is associated with snRNP U2.

The protein localises to the nucleus. The protein resides in the cajal body. Its subcellular location is the nucleoplasm. It is found in the cytoplasm. Functionally, involved in nuclear pre-mRNA splicing. The polypeptide is U2 small nuclear ribonucleoprotein B'' (U2B'') (Arabidopsis thaliana (Mouse-ear cress)).